The chain runs to 71 residues: MPIIKVRENEPFDVALRRFKRSCEKAGILSEVRRREFYEKPTTERKRAKASAIKRHIKKINREQLKKSRSF.

The protein belongs to the bacterial ribosomal protein bS21 family.

This Blochmanniella floridana protein is Small ribosomal subunit protein bS21.